The primary structure comprises 238 residues: Probable RNA/DNA demethylase ALKBH6 (238 aa).

Positions 96 to 227 (PANHVLVNQY…RVSLTIRRVP (132 aa)) constitute a Fe2OG dioxygenase domain. 2 residues coordinate 2-oxoglutarate: asparagine 103 and tyrosine 105. Positions 114, 116, and 182 each coordinate Fe cation. The 2-oxoglutarate site is built by arginine 218 and serine 220.

This sequence belongs to the alkB family. In terms of assembly, interacts with VCPKMT. Fe(2+) serves as cofactor.

The protein localises to the cytoplasm. It localises to the nucleus. In terms of biological role, probable Fe(2+)/2-oxoglutarate-dependent dioxygenase involved in oxidative demethylation of nucleic acids. Binds nucleic acids with a preference for ssDNA or ssRNA to other types of DNAs. May play a role in nucleic acid damage repair. This Mus musculus (Mouse) protein is Probable RNA/DNA demethylase ALKBH6 (Alkbh6).